Reading from the N-terminus, the 113-residue chain is Non-specific lipid-transfer protein 6 (113 aa).

The signal sequence occupies residues 1-19 (MRSLLLAVCLVLALHCGEA). Cystine bridges form between C23–C70, C33–C47, C48–C95, and C68–C109.

Belongs to the plant LTP family.

In terms of biological role, plant non-specific lipid-transfer proteins transfer phospholipids as well as galactolipids across membranes. May play a role in wax or cutin deposition in the cell walls of expanding epidermal cells and certain secretory tissues. This is Non-specific lipid-transfer protein 6 (LTP6) from Arabidopsis thaliana (Mouse-ear cress).